A 555-amino-acid polypeptide reads, in one-letter code: Potassium-transporting ATPase potassium-binding subunit (555 aa).

Helical transmembrane passes span 2-22, 60-80, 130-150, 173-193, 246-266, 278-298, 374-394, 412-432, 483-503, and 525-545; these read IWVA…PTGI, QYAL…YFIF, IGIT…VMAF, VFLP…VPQT, MSNI…PFTY, ILFV…TTSE, AGFV…GLMV, LIAV…ALAL, LVMF…AASL, and GIFI…MLVL.

Belongs to the KdpA family. The system is composed of three essential subunits: KdpA, KdpB and KdpC.

The protein localises to the cell membrane. Functionally, part of the high-affinity ATP-driven potassium transport (or Kdp) system, which catalyzes the hydrolysis of ATP coupled with the electrogenic transport of potassium into the cytoplasm. This subunit binds the extracellular potassium ions and delivers the ions to the membrane domain of KdpB through an intramembrane tunnel. This Bacillus mycoides (strain KBAB4) (Bacillus weihenstephanensis) protein is Potassium-transporting ATPase potassium-binding subunit.